The following is a 79-amino-acid chain: Pigment-dispersing hormone type 1 (79 aa).

The signal sequence occupies residues 1–22 (MRSAVVVALLVMVAMSLQLTAA). A76 carries the post-translational modification Alanine amide.

This sequence belongs to the arthropod PDH family. In terms of tissue distribution, eyestalk.

Its subcellular location is the secreted. Functionally, the pigment-dispersing hormone causes the migration of the distal retinal pigment into the proximal end of the pigment chromatophore cells and thus decreases the amount of light entering the retinulas. May also function as a neurotransmitter and/or neuromodulator. In Penaeus vannamei (Whiteleg shrimp), this protein is Pigment-dispersing hormone type 1 (PDH1).